We begin with the raw amino-acid sequence, 409 residues long: AT-rich interactive domain-containing protein 3C (409 aa).

Over residues 1–14 the composition is skewed to low complexity; it reads MEALQRQQAARLAQ. A disordered region spans residues 1–91; sequence MEALQRQQAA…SPSSQSPGIQ (91 aa). Residues 19-30 are compositionally biased toward pro residues; the sequence is LAPPRLPLPQPP. The span at 49–70 shows a compositional bias: acidic residues; it reads AEEEEGAEDEEGETPLAEEETA. The 93-residue stretch at 110–202 folds into the ARID domain; sequence DPKRKEFLDD…YLYPYECETR (93 aa). Disordered stretches follow at residues 233 to 274, 306 to 333, and 385 to 409; these read NLAG…PAHA, TREK…RLGA, and PVPA…STLP. Positions 235–257 are enriched in low complexity; sequence AGPTPRGAPGPASSHGPAPTATP. An REKLES domain is found at 301–386; sequence LASEATREKL…GILFARRQPV (86 aa). Basic and acidic residues predominate over residues 306–320; sequence TREKLAPEEPPEKRA. A compositionally biased stretch (pro residues) spans 393-402; it reads TNPPPLPSTG.

Interacts (via REKLES DOMAIN) with NPM1; the interaction mediates ARID3C nuclear shuttling.

It is found in the nucleus. Its function is as follows. Transcription factor involved in monocyte-to-macrophage differentiation. Forms a complex with NPM1 to translocate to the nucleus, acting as a transcription factor that promotes the expression of the genes involved in macrophage differentiation, such as STAT3, STAT1 and JUNB. The chain is AT-rich interactive domain-containing protein 3C (Arid3c) from Mus musculus (Mouse).